Here is a 132-residue protein sequence, read N- to C-terminus: Large ribosomal subunit protein uL14 (132 aa).

This sequence belongs to the universal ribosomal protein uL14 family. Part of the 50S ribosomal subunit. Forms a cluster with proteins L3 and L24e, part of which may contact the 16S rRNA in 2 intersubunit bridges.

Binds to 23S rRNA. Forms part of two intersubunit bridges in the 70S ribosome. The polypeptide is Large ribosomal subunit protein uL14 (Halobacterium salinarum (strain ATCC 29341 / DSM 671 / R1)).